Consider the following 294-residue polypeptide: Putative glucose-6-phosphate 1-epimerase (294 aa).

Substrate-binding residues include arginine 74 and arginine 99. Histidine 164 is an active-site residue. Aspartate 208 contributes to the substrate binding site. Glutamate 267 is an active-site residue.

This sequence belongs to the glucose-6-phosphate 1-epimerase family. As to quaternary structure, monomer in solution.

The catalysed reaction is alpha-D-glucose 6-phosphate = beta-D-glucose 6-phosphate. In terms of biological role, probably functions as a hexose-6-phosphate 1-epimerase. The sequence is that of Putative glucose-6-phosphate 1-epimerase from Salmonella typhimurium (strain LT2 / SGSC1412 / ATCC 700720).